An 815-amino-acid chain; its full sequence is Leucine--tRNA ligase (815 aa).

The short motif at 40 to 50 (PYPSGRIHMGH) is the 'HIGH' region element. The 'KMSKS' region signature appears at 583-587 (KMSKS). ATP is bound at residue lysine 586.

It belongs to the class-I aminoacyl-tRNA synthetase family.

Its subcellular location is the cytoplasm. The catalysed reaction is tRNA(Leu) + L-leucine + ATP = L-leucyl-tRNA(Leu) + AMP + diphosphate. This chain is Leucine--tRNA ligase, found in Nitratiruptor sp. (strain SB155-2).